We begin with the raw amino-acid sequence, 256 residues long: Small ribosomal subunit protein eS1 (256 aa).

At A2 the chain carries N-acetylalanine; partial.

It belongs to the eukaryotic ribosomal protein eS1 family. Component of the small ribosomal subunit. Mature ribosomes consist of a small (40S) and a large (60S) subunit. The 40S subunit contains about 33 different proteins and 1 molecule of RNA (18S). The 60S subunit contains about 49 different proteins and 3 molecules of RNA (25S, 5.8S and 5S).

The protein localises to the cytoplasm. The polypeptide is Small ribosomal subunit protein eS1 (Candida tropicalis (strain ATCC MYA-3404 / T1) (Yeast)).